The chain runs to 450 residues: UDP-N-acetylmuramoylalanine--D-glutamate ligase (450 aa).

ATP is bound at residue 118–124 (GSNGKTT).

It belongs to the MurCDEF family.

It localises to the cytoplasm. It catalyses the reaction UDP-N-acetyl-alpha-D-muramoyl-L-alanine + D-glutamate + ATP = UDP-N-acetyl-alpha-D-muramoyl-L-alanyl-D-glutamate + ADP + phosphate + H(+). The protein operates within cell wall biogenesis; peptidoglycan biosynthesis. Cell wall formation. Catalyzes the addition of glutamate to the nucleotide precursor UDP-N-acetylmuramoyl-L-alanine (UMA). In Halalkalibacterium halodurans (strain ATCC BAA-125 / DSM 18197 / FERM 7344 / JCM 9153 / C-125) (Bacillus halodurans), this protein is UDP-N-acetylmuramoylalanine--D-glutamate ligase.